We begin with the raw amino-acid sequence, 366 residues long: ATPase ASNA1 homolog (366 aa).

33–40 contacts ATP; that stretch reads KGGVGKTT. Residue D62 is part of the active site. ATP is bound by residues E234 and N261.

Belongs to the arsA ATPase family. As to quaternary structure, homodimer.

Its subcellular location is the cytoplasm. It localises to the endoplasmic reticulum. ATPase required for the post-translational delivery of tail-anchored (TA) proteins to the endoplasmic reticulum. Recognizes and selectively binds the transmembrane domain of TA proteins in the cytosol. This complex then targets to the endoplasmic reticulum by membrane-bound receptors, where the tail-anchored protein is released for insertion. This process is regulated by ATP binding and hydrolysis. ATP binding drives the homodimer towards the closed dimer state, facilitating recognition of newly synthesized TA membrane proteins. ATP hydrolysis is required for insertion. Subsequently, the homodimer reverts towards the open dimer state, lowering its affinity for the membrane-bound receptor, and returning it to the cytosol to initiate a new round of targeting. The chain is ATPase ASNA1 homolog from Cryptosporidium parvum (strain Iowa II).